Reading from the N-terminus, the 594-residue chain is Nucleolar protein 56 (594 aa).

Glycyl lysine isopeptide (Lys-Gly) (interchain with G-Cter in SUMO2) cross-links involve residues Lys-87, Lys-230, and Lys-240. The region spanning 292-410 (VAPSLSALIG…VEERLSFYET (119 aa)) is the Nop domain. Ser-314 carries the phosphoserine modification. Omega-N-methylarginine is present on Arg-359. 2 stretches are compositionally biased toward low complexity: residues 458–469 (ALASSENSSSTP) and 488–504 (QEVP…ISFS). The tract at residues 458–594 (ALASSENSSS…KKFHKASQED (137 aa)) is disordered. Phosphoserine is present on residues Ser-466 and Ser-467. The residue at position 468 (Thr-468) is a Phosphothreonine. Ser-511, Ser-519, Ser-520, and Ser-537 each carry phosphoserine. Residue Lys-540 forms a Glycyl lysine isopeptide (Lys-Gly) (interchain with G-Cter in SUMO2) linkage. Lys-561 carries the post-translational modification N6-acetyllysine. Phosphoserine is present on Ser-563. Residue Lys-564 forms a Glycyl lysine isopeptide (Lys-Gly) (interchain with G-Cter in SUMO2) linkage. Ser-569, Ser-570, Ser-579, and Ser-581 each carry phosphoserine. A compositionally biased stretch (basic residues) spans 580 to 594 (SSKKKKKFHKASQED).

This sequence belongs to the NOP5/NOP56 family. Part of a large pre-ribosomal ribonucleoprotein (RNP) complex, that consists of at least 62 ribosomal proteins, 45 nonribosomal proteins and both pre-rRNA and mature rRNA species. Within this complex directly interacts with TCOF1 in an RNA-independent manner. Core component of box C/D small nucleolar ribonucleoprotein (snoRNP) particles; the core proteins SNU13, NOP56, NOP58 and FBL or FBLL1 assemble stepwise onto the snoRNA. Interacts with NOP1 and NOP58. Interacts with NUFIP1, RUVBL1 and RUVBL2; RUVBL1:RUVBL2 seem to bridge the association of NOP56 with NUFIP1. Part of the small subunit (SSU) processome, composed of more than 70 proteins and the RNA chaperone small nucleolar RNA (snoRNA) U3. Interacts with NOP2 and FBL.

The protein resides in the nucleus. It localises to the nucleolus. The protein localises to the cytoplasm. It is found in the nucleoplasm. Functionally, involved in the early to middle stages of 60S ribosomal subunit biogenesis. Required for the biogenesis of box C/D snoRNAs such U3, U8 and U14 snoRNAs. Part of the small subunit (SSU) processome, first precursor of the small eukaryotic ribosomal subunit. During the assembly of the SSU processome in the nucleolus, many ribosome biogenesis factors, an RNA chaperone and ribosomal proteins associate with the nascent pre-rRNA and work in concert to generate RNA folding, modifications, rearrangements and cleavage as well as targeted degradation of pre-ribosomal RNA by the RNA exosome. Core component of box C/D small nucleolar ribonucleoprotein (snoRNP) complexes that function in methylation of multiple sites on ribosomal RNAs (rRNAs) and messenger RNAs (mRNAs). In Homo sapiens (Human), this protein is Nucleolar protein 56.